The primary structure comprises 476 residues: ENTH domain-containing protein C794.11c (476 aa).

An ENTH domain is found at Tyr-30–Ile-154. Disordered regions lie at residues Glu-157–Arg-198, Asn-213–Asp-308, Gln-410–Asn-429, and Val-444–Asp-472. Ser-173 is modified (phosphoserine). Low complexity-rich tracts occupy residues Arg-178–Arg-198 and Asn-213–Ser-222. Residue Ser-228 is modified to Phosphoserine. The segment covering Asp-229–Asp-240 has biased composition (acidic residues). Tyr-235 carries the phosphotyrosine modification. Ser-243 and Ser-244 each carry phosphoserine. The span at Gln-262–Lys-271 shows a compositional bias: basic and acidic residues. Positions Val-444–Val-454 are enriched in basic and acidic residues. Ser-459 bears the Phosphoserine mark.

In Schizosaccharomyces pombe (strain 972 / ATCC 24843) (Fission yeast), this protein is ENTH domain-containing protein C794.11c.